The chain runs to 404 residues: Argininosuccinate synthase (404 aa).

ATP contacts are provided by residues 10-18 and Ala37; that span reads AFSGGLDTS. 2 residues coordinate L-citrulline: Tyr88 and Ser93. Residue Gly118 participates in ATP binding. The L-aspartate site is built by Thr120, Asn124, and Asp125. Asn124 contributes to the L-citrulline binding site. L-citrulline is bound by residues Arg128, Ser179, Ser188, Glu264, and Tyr276.

The protein belongs to the argininosuccinate synthase family. Type 1 subfamily. As to quaternary structure, homotetramer.

The protein localises to the cytoplasm. The catalysed reaction is L-citrulline + L-aspartate + ATP = 2-(N(omega)-L-arginino)succinate + AMP + diphosphate + H(+). The protein operates within amino-acid biosynthesis; L-arginine biosynthesis; L-arginine from L-ornithine and carbamoyl phosphate: step 2/3. This chain is Argininosuccinate synthase, found in Nitrosomonas europaea (strain ATCC 19718 / CIP 103999 / KCTC 2705 / NBRC 14298).